A 639-amino-acid chain; its full sequence is Protein phosphatase 2C 35 (639 aa).

Residues 227–630 (GGDPCGLQWA…DDVSVIVISL (404 aa)) enclose the PPM-type phosphatase domain. Positions 262 and 263 each coordinate Mn(2+). A disordered region spans residues 295–341 (QNVQHDQRPDQPGSAPSTTASDNQDQWGRRRRTRRSRPPRGADDDQR). Residues 308-320 (SAPSTTASDNQDQ) show a composition bias toward polar residues. A compositionally biased stretch (basic residues) spans 323–332 (RRRRTRRSRP). Mn(2+) contacts are provided by aspartate 558 and aspartate 621.

It belongs to the PP2C family. As to quaternary structure, interacts with XA21 (via juxtamembrane and kinase domains). Mg(2+) serves as cofactor. It depends on Mn(2+) as a cofactor.

It is found in the cell membrane. The catalysed reaction is O-phospho-L-seryl-[protein] + H2O = L-seryl-[protein] + phosphate. It catalyses the reaction O-phospho-L-threonyl-[protein] + H2O = L-threonyl-[protein] + phosphate. Functionally, protein phosphatase that acts on XA21 pathogen recognition receptor. Negatively regulates cell death and XA21-mediated innate immunity. This is Protein phosphatase 2C 35 (XB15) from Oryza sativa subsp. japonica (Rice).